A 239-amino-acid chain; its full sequence is Fatty acid metabolism regulator protein (239 aa).

The HTH gntR-type domain maps to 6-74 (QSPAGFAEEY…HGKPTKVNNF (69 aa)). The segment at residues 34–53 (ERELSELIGVTRTTLREVLQ) is a DNA-binding region (H-T-H motif).

Homodimer.

Its subcellular location is the cytoplasm. Its function is as follows. Multifunctional regulator of fatty acid metabolism. The polypeptide is Fatty acid metabolism regulator protein (Shigella flexneri).